A 406-amino-acid chain; its full sequence is Phosphopentomutase (406 aa).

Mn(2+)-binding residues include aspartate 10, aspartate 305, histidine 310, aspartate 346, histidine 347, and histidine 358.

The protein belongs to the phosphopentomutase family. The cofactor is Mn(2+).

The protein localises to the cytoplasm. It catalyses the reaction 2-deoxy-alpha-D-ribose 1-phosphate = 2-deoxy-D-ribose 5-phosphate. It carries out the reaction alpha-D-ribose 1-phosphate = D-ribose 5-phosphate. It functions in the pathway carbohydrate degradation; 2-deoxy-D-ribose 1-phosphate degradation; D-glyceraldehyde 3-phosphate and acetaldehyde from 2-deoxy-alpha-D-ribose 1-phosphate: step 1/2. In terms of biological role, isomerase that catalyzes the conversion of deoxy-ribose 1-phosphate (dRib-1-P) and ribose 1-phosphate (Rib-1-P) to deoxy-ribose 5-phosphate (dRib-5-P) and ribose 5-phosphate (Rib-5-P), respectively. The chain is Phosphopentomutase from Aliivibrio fischeri (strain MJ11) (Vibrio fischeri).